A 165-amino-acid chain; its full sequence is Ribosome maturation factor RimM (165 aa).

The region spanning 94–165 is the PRC barrel domain; that stretch reads EDEFYIADLN…YVILNYQTKV (72 aa).

This sequence belongs to the RimM family. Binds ribosomal protein uS19.

The protein localises to the cytoplasm. Its function is as follows. An accessory protein needed during the final step in the assembly of 30S ribosomal subunit, possibly for assembly of the head region. Essential for efficient processing of 16S rRNA. May be needed both before and after RbfA during the maturation of 16S rRNA. It has affinity for free ribosomal 30S subunits but not for 70S ribosomes. The protein is Ribosome maturation factor RimM of Rickettsia typhi (strain ATCC VR-144 / Wilmington).